The following is a 474-amino-acid chain: Cysteine--tRNA ligase (474 aa).

Residue C30 participates in Zn(2+) binding. A 'HIGH' region motif is present at residues 32 to 42; the sequence is PTVYNYAHIGN. Positions 215, 240, and 244 each coordinate Zn(2+). The 'KMSKS' region motif lies at 272–276; it reads KMSKS. K275 is an ATP binding site.

Belongs to the class-I aminoacyl-tRNA synthetase family. Monomer. Zn(2+) serves as cofactor.

The protein resides in the cytoplasm. It catalyses the reaction tRNA(Cys) + L-cysteine + ATP = L-cysteinyl-tRNA(Cys) + AMP + diphosphate. In Brachyspira hyodysenteriae (strain ATCC 49526 / WA1), this protein is Cysteine--tRNA ligase.